The chain runs to 113 residues: Large ribosomal subunit protein uL18 (113 aa).

Belongs to the universal ribosomal protein uL18 family. In terms of assembly, part of the 50S ribosomal subunit; part of the 5S rRNA/L5/L18/L25 subcomplex. Contacts the 5S and 23S rRNAs.

This is one of the proteins that bind and probably mediate the attachment of the 5S RNA into the large ribosomal subunit, where it forms part of the central protuberance. The sequence is that of Large ribosomal subunit protein uL18 from Phocaeicola vulgatus (strain ATCC 8482 / DSM 1447 / JCM 5826 / CCUG 4940 / NBRC 14291 / NCTC 11154) (Bacteroides vulgatus).